The chain runs to 441 residues: GPI mannosyltransferase 2 (441 aa).

10 helical membrane passes run 4–24 (MTVL…LILV), 35–55 (ILFG…PGLG), 115–135 (LLAL…IFGG), 143–163 (LCFL…LSAP), 165–185 (GEAL…SSVL), 199–223 (LLAA…GVLF), 249–269 (VIVL…YIAF), 306–326 (YWVV…ALLL), 361–381 (LAII…VQII), and 418–438 (VAVQ…GSFL).

Belongs to the PIGV family.

It localises to the endoplasmic reticulum membrane. Its pathway is glycolipid biosynthesis; glycosylphosphatidylinositol-anchor biosynthesis. Mannosyltransferase involved in glycosylphosphatidylinositol-anchor biosynthesis. Transfers the second mannose to the glycosylphosphatidylinositol during GPI precursor assembly. The polypeptide is GPI mannosyltransferase 2 (gpi18) (Aspergillus fumigatus (strain ATCC MYA-4609 / CBS 101355 / FGSC A1100 / Af293) (Neosartorya fumigata)).